Consider the following 221-residue polypeptide: Translation initiation factor 6 (221 aa).

It belongs to the eIF-6 family.

In terms of biological role, binds to the 50S ribosomal subunit and prevents its association with the 30S ribosomal subunit to form the 70S initiation complex. In Cenarchaeum symbiosum (strain A), this protein is Translation initiation factor 6.